The primary structure comprises 373 residues: Peroxisomal biogenesis factor 3 (373 aa).

Over 1–15 (MLRSVWNFLKRHKKK) the chain is Cytoplasmic. Residues 1 to 45 (MLRSVWNFLKRHKKKCIFLGTVLGGVYILGKYGQKKIREIQEREA) are targeting to peroxisomes. Residues 16–36 (CIFLGTVLGGVYILGKYGQKK) form a helical membrane-spanning segment. Over 37–116 (IREIQEREAA…LKIISFTRST (80 aa)) the chain is Peroxisomal. The helical transmembrane segment at 117–140 (VAVYSTCMLVVLLRVQLNIIGGYI) threads the bilayer. The interval 120–136 (YSTCMLVVLLRVQLNII) is interaction with PEX19. Topologically, residues 141–373 (YLDNAAVGKN…AFSTPQQLEK (233 aa)) are cytoplasmic.

It belongs to the peroxin-3 family. As to quaternary structure, interacts with PEX19. As to expression, found in all examined tissues.

Its subcellular location is the peroxisome membrane. In terms of biological role, involved in peroxisome biosynthesis and integrity. Assembles membrane vesicles before the matrix proteins are translocated. As a docking factor for PEX19, is necessary for the import of peroxisomal membrane proteins in the peroxisomes. The polypeptide is Peroxisomal biogenesis factor 3 (PEX3) (Homo sapiens (Human)).